The chain runs to 962 residues: Translation initiation factor IF-2 (962 aa).

Residues 99-366 (VKAAQTQAAP…KKGKKLKLEP (268 aa)) form a disordered region. Residues 117–141 (DAAKARAEAAARAEARAKAEAEAAK) are compositionally biased toward basic and acidic residues. The segment covering 145-155 (AKAGNKAKPAA) has biased composition (low complexity). Basic and acidic residues predominate over residues 173-216 (KPAEESKAEKAQADKMPSEKPAEPKEKAAKPKHERNGKGKDAKK). Residues 219–234 (KPAAPAVPQPVVSAEE) are compositionally biased toward low complexity. Basic and acidic residues predominate over residues 235–269 (QAQRDEEARRAAALRAHQEALLKEKQERQARREAM). The span at 270–283 (KQQAEQQAKAAQEA) shows a compositional bias: low complexity. 2 stretches are compositionally biased toward basic and acidic residues: residues 314-327 (AKKEDRRNRDDEGQ) and 338-354 (GGRDRNNARNGDDERVR). Positions 462 to 631 (PRPPVVTVMG…LLEAEVLELT (170 aa)) constitute a tr-type G domain. A G1 region spans residues 471-478 (GHVDHGKT). 471 to 478 (GHVDHGKT) provides a ligand contact to GTP. The tract at residues 496-500 (GITQH) is G2. The interval 517–520 (DTPG) is G3. GTP is bound by residues 517 to 521 (DTPGH) and 571 to 574 (NKID). The tract at residues 571–574 (NKID) is G4. Residues 607-609 (SAK) form a G5 region.

It belongs to the TRAFAC class translation factor GTPase superfamily. Classic translation factor GTPase family. IF-2 subfamily.

The protein resides in the cytoplasm. Its function is as follows. One of the essential components for the initiation of protein synthesis. Protects formylmethionyl-tRNA from spontaneous hydrolysis and promotes its binding to the 30S ribosomal subunits. Also involved in the hydrolysis of GTP during the formation of the 70S ribosomal complex. The chain is Translation initiation factor IF-2 from Neisseria meningitidis serogroup B (strain ATCC BAA-335 / MC58).